We begin with the raw amino-acid sequence, 276 residues long: NAD kinase (276 aa).

The active-site Proton acceptor is the Asp66. Residues Asp66–Gly67, Asn139–Asp140, Asp168, Thr179–Ser184, and Gln234 contribute to the NAD(+) site.

The protein belongs to the NAD kinase family. Requires a divalent metal cation as cofactor.

It is found in the cytoplasm. The enzyme catalyses NAD(+) + ATP = ADP + NADP(+) + H(+). Its function is as follows. Involved in the regulation of the intracellular balance of NAD and NADP, and is a key enzyme in the biosynthesis of NADP. Catalyzes specifically the phosphorylation on 2'-hydroxyl of the adenosine moiety of NAD to yield NADP. The sequence is that of NAD kinase from Campylobacter lari (strain RM2100 / D67 / ATCC BAA-1060).